The chain runs to 191 residues: Guanylate kinase (191 aa).

Residues 10 to 188 enclose the Guanylate kinase-like domain; that stretch reads GQLIVLTGPS…ALHRLVKLIG (179 aa). 17–24 provides a ligand contact to ATP; the sequence is GPSGVGKG.

This sequence belongs to the guanylate kinase family.

It localises to the cytoplasm. It carries out the reaction GMP + ATP = GDP + ADP. Functionally, essential for recycling GMP and indirectly, cGMP. This Synechocystis sp. (strain ATCC 27184 / PCC 6803 / Kazusa) protein is Guanylate kinase (gmk).